A 175-amino-acid polypeptide reads, in one-letter code: RNA pyrophosphohydrolase (175 aa).

The Nudix hydrolase domain occupies 6-150; that stretch reads GFRPNVGIVI…KREVYRRVMK (145 aa). Residues 38-59 carry the Nudix box motif; sequence GGVDDGETPEQAMYRELYEEIG.

Belongs to the Nudix hydrolase family. RppH subfamily. It depends on a divalent metal cation as a cofactor.

Functionally, accelerates the degradation of transcripts by removing pyrophosphate from the 5'-end of triphosphorylated RNA, leading to a more labile monophosphorylated state that can stimulate subsequent ribonuclease cleavage. The chain is RNA pyrophosphohydrolase from Aeromonas hydrophila subsp. hydrophila (strain ATCC 7966 / DSM 30187 / BCRC 13018 / CCUG 14551 / JCM 1027 / KCTC 2358 / NCIMB 9240 / NCTC 8049).